The sequence spans 149 residues: L-alanine exporter AlaE (149 aa).

Transmembrane regions (helical) follow at residues 16 to 36, 46 to 66, 83 to 105, and 115 to 135; these read FAMV…LSGM, LVAI…RDLI, ADVL…TVGA, and SSNI…LDYC.

Belongs to the AlaE exporter family.

It localises to the cell inner membrane. Functionally, exports L-alanine. The protein is L-alanine exporter AlaE of Salmonella typhimurium (strain LT2 / SGSC1412 / ATCC 700720).